The sequence spans 733 residues: Nuclear hormone receptor family member nhr-66 (733 aa).

Low complexity-rich tracts occupy residues 113 to 130 and 165 to 185; these read PAIPSSSSCSEPSTSQAS and QQNRQQHQQQQRQQQQAQQQN. Positions 113-190 are disordered; it reads PAIPSSSSCS…AQQQNSMARK (78 aa). A DNA-binding region (nuclear receptor) is located at residues 266–343; the sequence is VPACAICGTD…SGMDKNSVQH (78 aa). NR C4-type zinc fingers lie at residues 269–289 and 305–326; these read CAICGTDSTGIHFGVDACAAC and CNKGGKCTVVKDGSAGQKCRAC. The interval 361–396 is disordered; that stretch reads PDAEFEPSAKVSTVSEPSTSSGPSGGFNQNVSSPAG. Residues 371-382 are compositionally biased toward low complexity; that stretch reads VSTVSEPSTSSG. In terms of domain architecture, NR LBD spans 444 to 687; that stretch reads CLGDWFRKPS…ACFNQMLDVE (244 aa). Residues 676–687 form an AF-2 region; sequence ADACFNQMLDVE. The interval 691 to 733 is disordered; that stretch reads VSPDGQKDSEAEQGPSPVSVPEAARGSYQDDDMPPVLEKNCDL.

It belongs to the nuclear hormone receptor family. In terms of assembly, interacts with nuclear hormone receptor nhr-49; the interaction is direct. As to expression, widely expressed, including in hypodermis, gut, muscle, and neuronal cells of the ventral nerve cord, head, and tail ganglia. Expressed in the head ganglion in several sensory and interneurons, including AVA.

Its subcellular location is the nucleus. Its function is as follows. Transcription factor. Binds to regulatory elements and regulates transcription of target genes, including the potassium channel accessory subunit mps-2. Negatively regulates transcription of mps-2, thereby modulating age-dependent memory decline. In concert with nuclear hormone receptor nhr-49, involved in regulating target genes with roles in sphingolipid breakdown and lipid remodeling. Plays a role in modulating mitochondrial morphology and function. The protein is Nuclear hormone receptor family member nhr-66 of Caenorhabditis elegans.